Here is a 191-residue protein sequence, read N- to C-terminus: uncharacterized protein (191 aa).

In terms of domain architecture, HTH tetR-type spans 6–66; the sequence is GLTQKMIVDA…ELAVRGLTKL (61 aa). Positions 29 to 48 form a DNA-binding region, H-T-H motif; sequence SLAALSKKMNVRPPSLYNHI.

This is an uncharacterized protein from Bacillus subtilis (strain 168).